Consider the following 188-residue polypeptide: Large ribosomal subunit protein eL18 (188 aa).

Residues 151–188 (HFGPAPGVPHSHTKPLVRSKGRKFERARGRRKSCGYKK) form a disordered region. Basic residues-rich tracts occupy residues 161–171 (SHTKPLVRSKG) and 178–188 (RGRRKSCGYKK).

It belongs to the eukaryotic ribosomal protein eL18 family.

Its subcellular location is the cytoplasm. In Lysiphlebus testaceipes (Greenbugs aphid parastoid), this protein is Large ribosomal subunit protein eL18 (RpL18).